Reading from the N-terminus, the 372-residue chain is Serine/threonine-protein kinase 17B (372 aa).

The Protein kinase domain maps to 33–293; that stretch reads TLTPKELGRG…AESCLSHSWL (261 aa). Residues 39 to 47 and K62 each bind ATP; that span reads LGRGKFAVV. D158 serves as the catalytic Proton acceptor. Positions 305–348 are disordered; it reads EETSGSSQIQDLTLRSSEEKTSKSSCNGSCGAREDKENIPEDGS. Residues 307-319 show a composition bias toward polar residues; the sequence is TSGSSQIQDLTLR.

Belongs to the protein kinase superfamily. CAMK Ser/Thr protein kinase family. DAP kinase subfamily. As to quaternary structure, interacts with CHP1; the interaction induces CHP1 to translocate from the Golgi to the nucleus. In terms of processing, autophosphorylated.

It is found in the nucleus. The protein resides in the cell membrane. The protein localises to the endoplasmic reticulum-Golgi intermediate compartment. It catalyses the reaction L-seryl-[protein] + ATP = O-phospho-L-seryl-[protein] + ADP + H(+). The enzyme catalyses L-threonyl-[protein] + ATP = O-phospho-L-threonyl-[protein] + ADP + H(+). Acts as a positive regulator of apoptosis. Phosphorylates myosin light chains. This chain is Serine/threonine-protein kinase 17B (Stk17b), found in Mus musculus (Mouse).